A 388-amino-acid chain; its full sequence is Ribonuclease D (388 aa).

Residues 24-191 enclose the 3'-5' exonuclease domain; the sequence is QYVSDEASLN…LYPQLADKLK (168 aa). The region spanning 230 to 310 is the HRDC domain; that stretch reads TEHQLAYLKV…QTADLSNPPE (81 aa).

Belongs to the RNase D family. The cofactor is a divalent metal cation.

Its subcellular location is the cytoplasm. The catalysed reaction is Exonucleolytic cleavage that removes extra residues from the 3'-terminus of tRNA to produce 5'-mononucleotides.. Its function is as follows. Exonuclease involved in the 3' processing of various precursor tRNAs. Initiates hydrolysis at the 3'-terminus of an RNA molecule and releases 5'-mononucleotides. The polypeptide is Ribonuclease D (Shewanella sp. (strain ANA-3)).